Consider the following 1210-residue polypeptide: Epidermal growth factor receptor (1210 aa).

Residues 1–24 (MRPSGTAGAALLALLAALCPASRA) form the signal peptide. At 25 to 645 (LEEKKVCQGT…CPTNGPKIPS (621 aa)) the chain is on the extracellular side. Cysteine 31 and cysteine 58 are oxidised to a cystine. Asparagine 56 carries N-linked (GlcNAc...) (complex) asparagine; atypical; partial glycosylation. Asparagine 73 is a glycosylation site (N-linked (GlcNAc...) asparagine; atypical). The Approximate repeat unit spans residues 75–300 (DLSFLKTIQE…CVKKCPRNYV (226 aa)). Residues asparagine 128, asparagine 175, and asparagine 196 are each glycosylated (N-linked (GlcNAc...) asparagine). Disulfide bonds link cysteine 157-cysteine 187, cysteine 190-cysteine 199, cysteine 194-cysteine 207, cysteine 215-cysteine 223, cysteine 219-cysteine 231, cysteine 232-cysteine 240, cysteine 236-cysteine 248, cysteine 251-cysteine 260, cysteine 264-cysteine 291, cysteine 295-cysteine 307, cysteine 311-cysteine 326, cysteine 329-cysteine 333, and cysteine 337-cysteine 362. Serine 229 is subject to Phosphoserine. Asparagine 352, asparagine 361, asparagine 413, and asparagine 444 each carry an N-linked (GlcNAc...) asparagine glycan. One copy of the Approximate repeat lies at 390–600 (QELDILKTVK…CVKTCPAGVM (211 aa)). 11 cysteine pairs are disulfide-bonded: cysteine 470–cysteine 499, cysteine 506–cysteine 515, cysteine 510–cysteine 523, cysteine 526–cysteine 535, cysteine 539–cysteine 555, cysteine 558–cysteine 571, cysteine 562–cysteine 579, cysteine 582–cysteine 591, cysteine 595–cysteine 617, cysteine 620–cysteine 628, and cysteine 624–cysteine 636. Asparagine 528 carries N-linked (GlcNAc...) asparagine glycosylation. N-linked (GlcNAc...) asparagine; partial glycosylation occurs at asparagine 568. N-linked (GlcNAc...) asparagine; partial glycosylation is present at asparagine 603. The N-linked (GlcNAc...) (high mannose) asparagine glycan is linked to asparagine 623. Residues 646–668 (IATGMVGALLLLLVVALGIGLFM) form a helical membrane-spanning segment. Topologically, residues 669–1210 (RRRHIVRKRT…APQSSEFIGA (542 aa)) are cytoplasmic. Threonine 678 is modified (phosphothreonine; by PKC and PKD/PRKD1). Residues 688 to 704 (LVEPLTPSGEAPNQALL) are important for dimerization, phosphorylation and activation. Residue threonine 693 is modified to Phosphothreonine; by PKD/PRKD1. Serine 695 carries the post-translational modification Phosphoserine. The region spanning 712–979 (FKKIKVLGSG…KMARDPQRYL (268 aa)) is the Protein kinase domain. A Glycyl lysine isopeptide (Lys-Gly) (interchain with G-Cter in ubiquitin) cross-link involves residue lysine 716. Position 718-726 (718-726 (LGSGAFGTV)) interacts with ATP. Lysine 737 is covalently cross-linked (Glycyl lysine isopeptide (Lys-Gly) (interchain with G-Cter in ubiquitin)). Residue lysine 745 participates in ATP binding. Lysine 745 bears the N6-(2-hydroxyisobutyryl)lysine mark. Residues lysine 754 and lysine 757 each participate in a glycyl lysine isopeptide (Lys-Gly) (interchain with G-Cter in ubiquitin) cross-link. 790 to 791 (TQ) contributes to the ATP binding site. Catalysis depends on aspartate 837, which acts as the Proton acceptor. Aspartate 855 is an ATP binding site. A Glycyl lysine isopeptide (Lys-Gly) (interchain with G-Cter in ubiquitin) cross-link involves residue lysine 867. Tyrosine 869 bears the Phosphotyrosine mark. Residues lysine 929, lysine 960, and lysine 970 each participate in a glycyl lysine isopeptide (Lys-Gly) (interchain with G-Cter in ubiquitin) cross-link. Phosphoserine is present on residues serine 991 and serine 995. 2 positions are modified to phosphotyrosine; by autocatalysis: tyrosine 998 and tyrosine 1016. Phosphoserine occurs at positions 1026 and 1039. Phosphothreonine is present on threonine 1041. A Phosphoserine modification is found at serine 1042. Cysteine 1049 carries S-palmitoyl cysteine lipidation. Serine 1064 carries the phosphoserine modification. Phosphotyrosine is present on tyrosine 1069. Residues serine 1070, serine 1071, and serine 1081 each carry the phosphoserine modification. Residues tyrosine 1092 and tyrosine 1110 each carry the phosphotyrosine; by autocatalysis modification. Residues 1097-1137 (VPKRPAGSVQNPVYHNQPLNPAPSRDPHYQDPHSTAVGNPE) form a disordered region. 2 stretches are compositionally biased toward polar residues: residues 1104–1115 (SVQNPVYHNQPL) and 1128–1137 (PHSTAVGNPE). A lipid anchor (S-palmitoyl cysteine) is attached at cysteine 1146. Serine 1166 carries the post-translational modification Phosphoserine. Phosphotyrosine; by autocatalysis is present on residues tyrosine 1172 and tyrosine 1197. Position 1199 is an omega-N-methylarginine (arginine 1199).

The protein belongs to the protein kinase superfamily. Tyr protein kinase family. EGF receptor subfamily. As to quaternary structure, binding of the ligand triggers homo- and/or heterodimerization of the receptor triggering its autophosphorylation. Heterodimer with ERBB2. Forms a complex with CCDC88A/GIV (via SH2-like regions) and GNAI3 which leads to enhanced EGFR signaling and triggering of cell migration; binding to CCDC88A requires autophosphorylation of the EGFR C-terminal region, and ligand stimulation is required for recruitment of GNAI3 to the complex. Interacts with ERRFI1; inhibits dimerization of the kinase domain and autophosphorylation. Part of a complex with ERBB2 and either PIK3C2A or PIK3C2B. Interacts with GRB2; an adapter protein coupling the receptor to downstream signaling pathways. Interacts with GAB2; involved in signaling downstream of EGFR. Interacts with STAT3; mediates EGFR downstream signaling in cell proliferation. Interacts with RIPK1; involved in NF-kappa-B activation. Interacts (autophosphorylated) with CBL, CBLB and CBLC; involved in EGFR ubiquitination and regulation; interaction with CBL is reduced in the presence of tensin TNS4. Interacts with SOCS5; regulates EGFR degradation through ELOC- and ELOB-mediated ubiquitination and proteasomal degradation. Interacts with PRMT5; methylates EGFR and enhances interaction with PTPN6. Interacts (phosphorylated) with PTPN6; inhibits EGFR-dependent activation of MAPK/ERK. Interacts with COPG1; essential for regulation of EGF-dependent nuclear transport of EGFR by retrograde trafficking from the Golgi to the ER. Interacts with TNK2; this interaction is dependent on EGF stimulation and kinase activity of EGFR. Interacts with PCNA; positively regulates PCNA. Interacts with PELP1. Interacts with MUC1. Interacts with AP2M1. Interacts with FER. May interact with EPS8; mediates EPS8 phosphorylation. Interacts (via SH2 domains) with GRB2, NCK1 and NCK2. Interacts with ATXN2. Interacts with GAREM1. Interacts (ubiquitinated) with ANKRD13A/B/D; the interaction is direct and may regulate EGFR internalization after EGF stimulation. Interacts with GPER1; the interaction occurs in an estrogen-dependent manner. Interacts (via C-terminal cytoplasmic kinase domain) with ZPR1 (via zinc fingers). Interacts with RNF115 and RNF126. Interacts with GPRC5A (via its transmembrane domain). Interacts with FAM83B; positively regulates EGFR inducing its autophosphorylation in absence of stimulation by EGF. Interacts with LAPTM4B; positively correlates with EGFR activation. Interacts with STX19. Interacts with CD44. Interacts with PGRMC1; the interaction requires PGRMC1 homodimerization. Interacts with PIKFYVE. Interacts with NEU3. Interacts with TRAF4. Interacts with the ant venom OMEGA-myrmeciitoxin(02)-Mg1a. Interacts with CD82; this interaction facilitates ligand-induced endocytosis of the receptor and its subsequent desensitization. Post-translationally, phosphorylated on Tyr residues in response to EGF. Phosphorylation at Ser-695 is partial and occurs only if Thr-693 is phosphorylated. Phosphorylation at Thr-678 and Thr-693 by PRKD1 inhibits EGF-induced MAPK8/JNK1 activation. Dephosphorylation by PTPRJ prevents endocytosis and stabilizes the receptor at the plasma membrane. Autophosphorylation at Tyr-1197 is stimulated by methylation at Arg-1199 and enhances interaction with PTPN6. Autophosphorylation at Tyr-1092 and/or Tyr-1110 recruits STAT3. Dephosphorylated by PTPN1 and PTPN2. Monoubiquitinated and polyubiquitinated upon EGF stimulation; which does not affect tyrosine kinase activity or signaling capacity but may play a role in lysosomal targeting. Polyubiquitin linkage is mainly through 'Lys-63', but linkage through 'Lys-48', 'Lys-11' and 'Lys-29' also occurs. Deubiquitination by OTUD7B prevents degradation. Ubiquitinated by RNF115 and RNF126. Ubiquitinated by ZNRF1 or CBL at different lysines in response to EGF stimulation; leading to recruitment of the ESCRT machinery and subsequent degradation in the lysosomes. Deubiquitinated by UCHL1 leading to the inhibition of its degradation. In terms of processing, palmitoylated on Cys residues by ZDHHC20. Palmitoylation inhibits internalization after ligand binding, and increases the persistence of tyrosine-phosphorylated EGFR at the cell membrane. Palmitoylation increases the amplitude and duration of EGFR signaling. Post-translationally, methylated. Methylation at Arg-1199 by PRMT5 stimulates phosphorylation at Tyr-1197. Ubiquitously expressed. Isoform 2 is also expressed in ovarian cancers.

Its subcellular location is the cell membrane. The protein localises to the endoplasmic reticulum membrane. It localises to the golgi apparatus membrane. It is found in the nucleus membrane. The protein resides in the endosome. Its subcellular location is the endosome membrane. The protein localises to the nucleus. It localises to the secreted. It carries out the reaction L-tyrosyl-[protein] + ATP = O-phospho-L-tyrosyl-[protein] + ADP + H(+). Endocytosis and inhibition of the activated EGFR by phosphatases like PTPRJ and PTPRK constitute immediate regulatory mechanisms. Upon EGF-binding phosphorylates EPS15 that regulates EGFR endocytosis and activity. Moreover, inducible feedback inhibitors including LRIG1, SOCS4, SOCS5 and ERRFI1 constitute alternative regulatory mechanisms for the EGFR signaling. Up-regulated by NEU3-mediated desialylation of N-linked glycan at Asn-528. Functionally, receptor tyrosine kinase binding ligands of the EGF family and activating several signaling cascades to convert extracellular cues into appropriate cellular responses. Known ligands include EGF, TGFA/TGF-alpha, AREG, epigen/EPGN, BTC/betacellulin, epiregulin/EREG and HBEGF/heparin-binding EGF. Ligand binding triggers receptor homo- and/or heterodimerization and autophosphorylation on key cytoplasmic residues. The phosphorylated receptor recruits adapter proteins like GRB2 which in turn activates complex downstream signaling cascades. Activates at least 4 major downstream signaling cascades including the RAS-RAF-MEK-ERK, PI3 kinase-AKT, PLCgamma-PKC and STATs modules. May also activate the NF-kappa-B signaling cascade. Also directly phosphorylates other proteins like RGS16, activating its GTPase activity and probably coupling the EGF receptor signaling to the G protein-coupled receptor signaling. Also phosphorylates MUC1 and increases its interaction with SRC and CTNNB1/beta-catenin. Positively regulates cell migration via interaction with CCDC88A/GIV which retains EGFR at the cell membrane following ligand stimulation, promoting EGFR signaling which triggers cell migration. Plays a role in enhancing learning and memory performance. Plays a role in mammalian pain signaling (long-lasting hypersensitivity). Its function is as follows. Isoform 2 may act as an antagonist of EGF action. (Microbial infection) Acts as a receptor for hepatitis C virus (HCV) in hepatocytes and facilitates its cell entry. Mediates HCV entry by promoting the formation of the CD81-CLDN1 receptor complexes that are essential for HCV entry and by enhancing membrane fusion of cells expressing HCV envelope glycoproteins. This chain is Epidermal growth factor receptor, found in Homo sapiens (Human).